Here is a 293-residue protein sequence, read N- to C-terminus: Haloalkane dehalogenase (293 aa).

One can recognise an AB hydrolase-1 domain in the interval 34–158 (PVLFLHGNPT…FQAFRTADVG (125 aa)). D106 serves as the catalytic Nucleophile. E130 functions as the Proton donor in the catalytic mechanism. The Proton acceptor role is filled by H272.

The protein belongs to the haloalkane dehalogenase family. Type 2 subfamily. In terms of assembly, monomer.

The enzyme catalyses 1-haloalkane + H2O = a halide anion + a primary alcohol + H(+). Its pathway is xenobiotic degradation; haloalkane degradation. It functions in the pathway xenobiotic degradation; 1,3-dichloropropene degradation. Functionally, catalyzes hydrolytic cleavage of carbon-halogen bonds in halogenated aliphatic compounds, leading to the formation of the corresponding primary alcohols, halide ions and protons. Has a broad substrate specificity, as it is able to dehalogenate mono- and di- chlorinated and brominated alkanes (up to at least C10), and the two isomers of 1,3-dichloropropene to 3-chloroallyl alcohol; the highest activity was found with 1,2-dibromoethane, while no activity was observed with the analog 1,2-dichloroethane. In Pseudomonas pavonaceae, this protein is Haloalkane dehalogenase (dhaA).